Consider the following 184-residue polypeptide: Ras protein let-60 (184 aa).

Position 10–17 (10–17 (GDGGVGKS)) interacts with GTP. The short motif at 32-40 (YDPTIEDSY) is the Effector region element. GTP-binding positions include 57-61 (DTAGQ) and 116-119 (NKCD). C181 is subject to Cysteine methyl ester. A lipid anchor (S-farnesyl cysteine) is attached at C181. Residues 182 to 184 (QIM) constitute a propeptide, removed in mature form.

It belongs to the small GTPase superfamily. Ras family. Interacts with soc-2. Interacts (in GTP-bound form) with plc-1 (via Ras-associating domain 1). As to expression, expressed in body wall muscles and in the nervous system including ganglion, nerve ring dorsal and ventral nerve cords, motor neurons and sensory tail neurons.

The protein resides in the cell membrane. The enzyme catalyses GTP + H2O = GDP + phosphate + H(+). Functionally, GTP-binding protein with GTPase activity. The level of let-60 controls the switch between vulval and hypodermal cell fates during C.elegans vulval induction. May stimulate the guanine nucleotide exchange factor (GEF) activity of rap-1. May induce nuclear condensation. The chain is Ras protein let-60 from Caenorhabditis elegans.